A 363-amino-acid chain; its full sequence is tRNA(Met) cytidine acetate ligase (363 aa).

Residues 7–20 (IAEF…HKYL), Gly-96, Asn-152, and Arg-175 each bind ATP.

This sequence belongs to the TmcAL family.

It is found in the cytoplasm. The enzyme catalyses cytidine(34) in elongator tRNA(Met) + acetate + ATP = N(4)-acetylcytidine(34) in elongator tRNA(Met) + AMP + diphosphate. Its function is as follows. Catalyzes the formation of N(4)-acetylcytidine (ac(4)C) at the wobble position of elongator tRNA(Met), using acetate and ATP as substrates. First activates an acetate ion to form acetyladenylate (Ac-AMP) and then transfers the acetyl group to tRNA to form ac(4)C34. In Streptococcus thermophilus (strain ATCC BAA-491 / LMD-9), this protein is tRNA(Met) cytidine acetate ligase.